Here is a 1585-residue protein sequence, read N- to C-terminus: Sterol 3-beta-glucosyltransferase (1585 aa).

Positions 1 to 18 (MSPPISPTPPPLQPPFPP) are enriched in pro residues. 3 disordered regions span residues 1-154 (MSPP…CDFR), 177-225 (PWEE…PTHT), and 249-279 (YQYA…LPKG). Composition is skewed to polar residues over residues 65-77 (DQAT…SLIP), 105-123 (DAQT…STHE), and 132-148 (PRTS…QMAE). Positions 178-194 (WEEDDDSDDGEDDDEFI) are enriched in acidic residues. Residues 255–273 (ETSSRRTSAAGSESSSEGE) are compositionally biased toward low complexity. A GRAM 1 domain is found at 387-555 (ERLMEVFGLE…EAIVDVEKSP (169 aa)). Residues 438–530 (LLVKSGPLHK…WVKAIQKVMF (93 aa)) form the PH domain. Disordered stretches follow at residues 625 to 645 (TSHA…LGMA) and 666 to 852 (DGEP…GSES). The span at 670–689 (LEEHSQGPHHNDEDASHLPH) shows a compositional bias: basic and acidic residues. Composition is skewed to polar residues over residues 760–785 (TDSS…QASV), 806–817 (NKPSVVDSNSAE), and 827–840 (SWTS…QMVK). A GRAM 2 domain is found at 862–933 (RKFRTFFALS…RDLYGLKAQK (72 aa)). S1043, R1044, D1046, I1358, H1360, H1373, G1377, T1378, D1397, and Q1398 together coordinate UDP-alpha-D-glucose. The tract at residues 1499–1555 (NRVRSRSRSRSRSSQGRFSPRRHTVDDDGWSVVSGGSRSRSGSASAVTSPERRPLNI) is disordered. The span at 1529-1545 (SVVSGGSRSRSGSASAV) shows a compositional bias: low complexity.

The protein belongs to the glycosyltransferase 28 family.

The protein resides in the cytoplasm. Its subcellular location is the membrane. The enzyme catalyses a sterol + UDP-alpha-D-glucose = a sterol 3-beta-D-glucoside + UDP + H(+). It catalyses the reaction ergosterol + UDP-alpha-D-glucose = ergosteryl 3-beta-D-glucoside + UDP + H(+). Its function is as follows. Sterol glycosyltransferase responsible for the glycosylation of ergosterol to form ergosterol-glucoside. The protein is Sterol 3-beta-glucosyltransferase of Cryptococcus neoformans var. neoformans serotype D (strain JEC21 / ATCC MYA-565) (Filobasidiella neoformans).